Here is a 508-residue protein sequence, read N- to C-terminus: Cyclin-A1-1 (508 aa).

The span at methionine 1–valine 28 shows a compositional bias: low complexity. Disordered regions lie at residues methionine 1–alanine 40 and valine 82–leucine 125. Residues glycine 29–alanine 39 are compositionally biased toward gly residues. Residues alanine 98 to alanine 111 show a composition bias toward low complexity.

Belongs to the cyclin family. Cyclin AB subfamily. Expressed in the dividing region of the root cap and root apex. Expressed in the intercalary meristem of internodes and in adventitious roots under submergence conditions.

Its function is as follows. Involved in the control of the cell cycle at the G2/M (mitosis) transition. The sequence is that of Cyclin-A1-1 (CYCA1-1) from Oryza sativa subsp. japonica (Rice).